Reading from the N-terminus, the 405-residue chain is Argininosuccinate synthase (405 aa).

ATP-binding positions include 10 to 18 (AYSGGLDTS) and Ala-37. Tyr-88 and Ser-93 together coordinate L-citrulline. Gly-118 serves as a coordination point for ATP. Thr-120, Asn-124, and Asp-125 together coordinate L-aspartate. An L-citrulline-binding site is contributed by Asn-124. L-citrulline-binding residues include Arg-128, Ser-179, Ser-188, Glu-264, and Tyr-276.

The protein belongs to the argininosuccinate synthase family. Type 1 subfamily. In terms of assembly, homotetramer.

The protein localises to the cytoplasm. The catalysed reaction is L-citrulline + L-aspartate + ATP = 2-(N(omega)-L-arginino)succinate + AMP + diphosphate + H(+). It functions in the pathway amino-acid biosynthesis; L-arginine biosynthesis; L-arginine from L-ornithine and carbamoyl phosphate: step 2/3. This Pseudomonas syringae pv. tomato (strain ATCC BAA-871 / DC3000) protein is Argininosuccinate synthase.